A 342-amino-acid polypeptide reads, in one-letter code: Non-homologous end-joining protein 1 (342 aa).

A run of 2 helical transmembrane segments spans residues Leu-27–Leu-47 and Met-129–Thr-149. Residues Leu-173–Asn-342 are interaction with LIF1. The tract at residues Ala-270–Asn-342 is disordered. Basic and acidic residues predominate over residues Pro-286 to Glu-296. Residues Ser-297–Glu-312 are compositionally biased toward polar residues. The segment covering Lys-331–Asn-342 has biased composition (basic residues).

This sequence belongs to the XRCC4-XLF family. XLF subfamily. As to quaternary structure, interacts (via C-terminus) with LIF1 (via N-terminus); the interaction is direct. Interacts with DNL4.

It is found in the cytoplasm. It localises to the nucleus membrane. In terms of biological role, involved in non-homologous end joining (NHEJ). Facilitates the transport of LIF1 into the nucleus, where it can interact with DNA ligase DNL4 to repair double-strand breaks (DSB). Mediates mating-type regulation of NHEJ. Prevents chromosome circularisation by NHEJ in absence of telomerase. This is Non-homologous end-joining protein 1 (NEJ1) from Saccharomyces cerevisiae (strain ATCC 204508 / S288c) (Baker's yeast).